The primary structure comprises 689 residues: Glycine--tRNA ligase beta subunit (689 aa).

The protein belongs to the class-II aminoacyl-tRNA synthetase family. In terms of assembly, tetramer of two alpha and two beta subunits.

The protein localises to the cytoplasm. It carries out the reaction tRNA(Gly) + glycine + ATP = glycyl-tRNA(Gly) + AMP + diphosphate. This chain is Glycine--tRNA ligase beta subunit, found in Edwardsiella ictaluri (strain 93-146).